The primary structure comprises 207 residues: Cytochrome c oxidase subunit 3 (207 aa).

Transmembrane regions (helical) follow at residues 28–48 (FLGF…LFAT), 70–90 (VVFM…YAIY), 102–122 (LWFG…IYEF), 144–164 (LVGT…TLMI), and 186–206 (WHFI…MGMV).

The protein belongs to the cytochrome c oxidase subunit 3 family.

It is found in the cell membrane. The enzyme catalyses 4 Fe(II)-[cytochrome c] + O2 + 8 H(+)(in) = 4 Fe(III)-[cytochrome c] + 2 H2O + 4 H(+)(out). This Bacillus sp. (strain PS3) protein is Cytochrome c oxidase subunit 3 (ctaE).